Consider the following 1135-residue polypeptide: Vinculin (1135 aa).

The segment at 2 to 835 is N-terminal globular head; sequence PVFHTRTIES…GAVAKVREAF (834 aa). Tyrosine 100 carries the post-translational modification Phosphotyrosine. The segment at 168 to 208 is talin-interaction; sequence MTKMAKMIDERQQELTHQEHRVMLVNSMNTVKELLPVLISA. 3 repeat units span residues 259 to 369, 370 to 479, and 480 to 589. Residues 259–589 form a 3 X 112 AA tandem repeats region; the sequence is ASKDTEAMKR…LKDLKARMQE (331 aa). A phosphotyrosine mark is found at tyrosine 537 and tyrosine 822. The interval 836 to 878 is linker (Pro-rich); the sequence is QPQEPDFPPPPPDLEHLHLTDELAPPKPPLPEGEVPPPRPPPP. A disordered region spans residues 837 to 888; it reads PQEPDFPPPPPDLEHLHLTDELAPPKPPLPEGEVPPPRPPPPEEKDEEFPEQ. A compositionally biased stretch (pro residues) spans 860-876; the sequence is PPKPPLPEGEVPPPRPP. The interval 879–1135 is C-terminal tail; that stretch reads EEKDEEFPEQ…RWVRKTPWYQ (257 aa). Facilitates phospholipid membrane insertion stretches follow at residues 1004–1047 and 1121–1135; these read RLVR…KRIR and AGFT…PWYQ. Residue tyrosine 1134 is modified to Phosphotyrosine; by SRC-type Tyr-kinases.

Belongs to the vinculin/alpha-catenin family. Exhibits self-association properties. Interacts with APBB1IP, NRAP and TLN1. Interacts with CTNNB1 and this interaction is necessary for its localization to the cell-cell junctions and for its function in regulating cell surface expression of E-cadherin. Phosphorylated; on serines, threonines and tyrosines. Phosphorylation on Tyr-1134 in activated platelets affects head-tail interactions and cell spreading but has no effect on actin binding nor on localization to focal adhesion plaques. In terms of processing, acetylated; mainly by myristic acid but also by a small amount of palmitic acid. In terms of tissue distribution, isoform Metavinculin is muscle-specific.

Its subcellular location is the cell membrane. It localises to the cell junction. The protein resides in the adherens junction. The protein localises to the focal adhesion. It is found in the cytoplasm. Its subcellular location is the cytoskeleton. It localises to the sarcolemma. The protein resides in the cell projection. The protein localises to the podosome. In terms of biological role, actin filament (F-actin)-binding protein involved in cell-matrix adhesion and cell-cell adhesion. Regulates cell-surface E-cadherin expression and potentiates mechanosensing by the E-cadherin complex. May also play important roles in cell morphology and locomotion. The sequence is that of Vinculin (VCL) from Gallus gallus (Chicken).